The primary structure comprises 185 residues: dTTP/UTP pyrophosphatase (185 aa).

The Proton acceptor role is filled by D64.

Belongs to the Maf family. YhdE subfamily. The cofactor is a divalent metal cation.

It is found in the cytoplasm. The catalysed reaction is dTTP + H2O = dTMP + diphosphate + H(+). It catalyses the reaction UTP + H2O = UMP + diphosphate + H(+). Nucleoside triphosphate pyrophosphatase that hydrolyzes dTTP and UTP. May have a dual role in cell division arrest and in preventing the incorporation of modified nucleotides into cellular nucleic acids. This chain is dTTP/UTP pyrophosphatase, found in Thermococcus gammatolerans (strain DSM 15229 / JCM 11827 / EJ3).